A 273-amino-acid chain; its full sequence is Shikimate dehydrogenase (NADP(+)) (273 aa).

Residues 19–21 (SKS) and Thr-66 contribute to the shikimate site. The active-site Proton acceptor is the Lys-70. Shikimate-binding residues include Asn-91 and Asp-107. Residues 131 to 135 (GAGGA) and Met-218 contribute to the NADP(+) site. Position 220 (Tyr-220) interacts with shikimate. Gly-242 serves as a coordination point for NADP(+).

This sequence belongs to the shikimate dehydrogenase family. In terms of assembly, homodimer.

The enzyme catalyses shikimate + NADP(+) = 3-dehydroshikimate + NADPH + H(+). Its pathway is metabolic intermediate biosynthesis; chorismate biosynthesis; chorismate from D-erythrose 4-phosphate and phosphoenolpyruvate: step 4/7. Functionally, involved in the biosynthesis of the chorismate, which leads to the biosynthesis of aromatic amino acids. Catalyzes the reversible NADPH linked reduction of 3-dehydroshikimate (DHSA) to yield shikimate (SA). In Buchnera aphidicola subsp. Acyrthosiphon pisum (strain 5A), this protein is Shikimate dehydrogenase (NADP(+)).